The chain runs to 741 residues: MSKRVQPAWQAPKPAERPKLRLYNSLTRQKEDFVPLDGNNVTWYSCGPTVYDASHMGHARSYISFDILRRILADYFGYNIHYVMNITDIDDKIIKRARQNHLFEEYAGESANLPLDQLLGHQKEVLVRFQETCAKNTDPDKKVMLDKTLQRMNDAVVALTTAVSQGDEKGIAEKRQHYLNEAKDPIAEWLDGKKGAEINDNAVFESLPRFWEDQFHNDMKSLNILPPDVLTRVSEYVPQIVAFIQKIIDNGLAYAANNSVYFDVNGFDRKEKHHYAKLVPEAYGDTKSLQEGEGDLSVAEDRLSEKRSANDFALWKASKAGEPWWDSPWGRGRPGWHIECSAMASDIFGSTFDIHTGGVDLKFPHHDNELAQSEAAFNESEWVKYFLHTGHLTIAGCKMSKSLKNFVTIQEALKKHSATQLRLAFLLHSWKDTLDYSENTMEMATQYEKFLNEFFLNVKDLTRHVLSEEPRRQFDAWTDVEAALQKKFSSSQVQVHAALCDNVDTRSALDAIRELVSASNVYIRDNKSRLNSLLLRNVATYITDLLHVFGAIAGPRGGIGFPVSGGAGPQAAGGDLETTVLPYVQTLAEFRNLVREQAKALKAFDILKLCDDLRDNILPNLGVRLEDKDGGKFAVKLVDRDSLLREREAKLAAEAEKAAEKERKKQAVAAAAAAKDAQRRVNPKQMFLGETEKYSAFDENGLPTLDKEGKEISKGQVKKLQKLQQQQEQRYKEYLASIKEA.

C46 contacts Zn(2+). The 'HIGH' region signature appears at 48-58 (PTVYDASHMGH). S297 is subject to Phosphoserine. 3 residues coordinate Zn(2+): C340, H365, and E369. A 'KMSKS' region motif is present at residues 398-402 (KMSKS). K401 lines the ATP pocket.

This sequence belongs to the class-I aminoacyl-tRNA synthetase family. It depends on Zn(2+) as a cofactor.

The protein localises to the cytoplasm. It catalyses the reaction tRNA(Cys) + L-cysteine + ATP = L-cysteinyl-tRNA(Cys) + AMP + diphosphate. The polypeptide is Cysteine--tRNA ligase, cytoplasmic (Aats-cys) (Drosophila pseudoobscura pseudoobscura (Fruit fly)).